Here is a 239-residue protein sequence, read N- to C-terminus: Peptidyl-tRNA hydrolase (239 aa).

Position 14 (Tyr14) interacts with tRNA. The active-site Proton acceptor is His19. TRNA-binding residues include Phe64, Asn66, and Asn112. Positions 186 to 239 (RTAPPRPSTGTGRPPAKTPARAEEPPAPAASPAPATAPLPDARSPLQKLVDRFK) are disordered. Positions 193-204 (STGTGRPPAKTP) are enriched in low complexity. Over residues 210 to 222 (PPAPAASPAPATA) the composition is skewed to pro residues.

It belongs to the PTH family. As to quaternary structure, monomer.

Its subcellular location is the cytoplasm. It carries out the reaction an N-acyl-L-alpha-aminoacyl-tRNA + H2O = an N-acyl-L-amino acid + a tRNA + H(+). In terms of biological role, hydrolyzes ribosome-free peptidyl-tRNAs (with 1 or more amino acids incorporated), which drop off the ribosome during protein synthesis, or as a result of ribosome stalling. Functionally, catalyzes the release of premature peptidyl moieties from peptidyl-tRNA molecules trapped in stalled 50S ribosomal subunits, and thus maintains levels of free tRNAs and 50S ribosomes. This is Peptidyl-tRNA hydrolase from Ruegeria pomeroyi (strain ATCC 700808 / DSM 15171 / DSS-3) (Silicibacter pomeroyi).